A 533-amino-acid polypeptide reads, in one-letter code: MALKNVPFRSEVLAWNSDNLADYFRKLNYRDCEKAVKKYHIDGARFLNLTENDIQKFPKLRMPLLSKLSQDINKNEERRSIFTRKPQIPRFLEETESHEEDDGGWSSFEDDYESPNDDDPDGEDDGDYESPNEEEQALVDDAADYEPPPSNNEEALQSSILPPNSFHNTNSMYIDRPPTGKVSQQPPVPPLRPKPALPPLPTGRNHSPLSPPHPNHEEPSRSGNNKTAKLPAPSIDRSTKPPLDRSLAPLDREPFILGKKPPFSDKPSAPLGREHLPKIQKPPLPPAMDRHERNERLGPVTTRKPPVPRHGRGPDRRENDEDDVHQRPLPQPSLPSMSSNTFPSRSVQPSSKNTFPLAHMPGAFSESNIGFQQSASLPPYFSQGPGNRPPLRSEGRNLPLPVPNRPQPPSPGEEETPLDEEWYVSYITRPEAEAALRKINQDGTFLVRDSSKKTANNPYVLMVLYKDKVYNIQIRYQEESQVYLLGTGLRGKEDFLSVSDIIDYFRKMPLLLIDGKNRGSRYQCTLTHAAGCL.

One can recognise an SAM domain in the interval 12 to 78 (VLAWNSDNLA…SQDINKNEER (67 aa)). The residue at position 23 (Tyr23) is a Phosphotyrosine. 2 disordered regions span residues 78–359 (RRSI…PLAH) and 374–419 (SASL…TPLD). A compositionally biased stretch (acidic residues) spans 94 to 144 (ETESHEEDDGGWSSFEDDYESPNDDDPDGEDDGDYESPNEEEQALVDDAAD). The segment covering 151–172 (NNEEALQSSILPPNSFHNTNSM) has biased composition (polar residues). Over residues 186–201 (PPVPPLRPKPALPPLP) the composition is skewed to pro residues. 2 positions are modified to phosphoserine: Ser207 and Ser210. A compositionally biased stretch (polar residues) spans 340 to 354 (NTFPSRSVQPSSKNT). Ser376 and Ser410 each carry phosphoserine. Residues 400–411 (LPVPNRPQPPSP) show a composition bias toward pro residues. Residues 422 to 530 (WYVSYITRPE…RYQCTLTHAA (109 aa)) enclose the SH2 domain.

Interacts with SLA. Interacts with CBLB. Interacts with GRB2. Interacts with SHB. Interacts with PRAM1. Interacts (via SH2 domain) with CD6 (via tyrosine phosphorylated C-terminus). Interacts with FYB1 and the phosphorylated form of FYB2. Interacts with 14-3-3 adapter/YWHAZ; this phosphorylation leads to YWHAZ proteolytic degradation. Interacts with VAV1; this interaction plays a role in TCR-mediated cytokine production. Interacts with AGER; this interaction plays an important role in AGER-mediated pro-inflammatory responses and cytokine release. In terms of processing, phosphorylated after T-cell receptor activation by ZAP70, ITK and TXK, which leads to the up-regulation of Th1 preferred cytokine IL-2. SYK-dependent phosphorylation is required for recruitment of PI3K signaling components. In terms of tissue distribution, highly expressed in spleen, thymus, and peripheral blood leukocytes.

It localises to the cytoplasm. Its function is as follows. Adapter protein primarily involved in signaling pathways within T-cells, as well as other immune cells such as platelets, mast cells, and natural killer (NK) cells. Plays a crucial role for transducing signal from the T-cell receptor (TCR) after antigen recognition leading to T-cell activation. Mechanistically, once phosphorylated by the kinase ZAP70, mediates interactions with the guanine-nucleotide exchange factor VAV1, the adapter protein NCK and the kinase ITK. In turn, stimulates the activation of PKC-theta/PRKCQ and NF-kappa-B transcriptional activity in response to CD3 and CD28 costimulation. Also plays an essential role in AGER-induced signaling pathways including p38 MAPK and ERK1/2 activation leading to cytokine release and pro-inflammatory responses. In Mus musculus (Mouse), this protein is Lymphocyte cytosolic protein 2 (Lcp2).